We begin with the raw amino-acid sequence, 181 residues long: Large ribosomal subunit protein uL5c (181 aa).

The protein belongs to the universal ribosomal protein uL5 family. In terms of assembly, part of the 50S ribosomal subunit; contacts the 5S rRNA.

The protein localises to the plastid. The protein resides in the chloroplast. Binds 5S rRNA, forms part of the central protuberance of the 50S subunit. The chain is Large ribosomal subunit protein uL5c (rpl5) from Pyropia yezoensis (Susabi-nori).